Reading from the N-terminus, the 304-residue chain is MDYQAILETIHRDIQPWLGKGRVADYIPELAKASATDFGMAIVTPRGEVFRVGQAETLFSIQSISKLFACTLAFQLEGESLWQRVGREPSGNAFNSLVQLEHENGIPRNPFINAGALVVTDVLCRRFVQAETAMVQFMRRLVDNPRVDYNPRVALSELEHADRNRAMAHFMRSFGNLHMPVETVIDAYCRQCAIEMHCVDLARAVLFLANGGVVPWSGERVIETSPAKRLSALMLTCGTYDAAGDFVYRVGLPAKSGVGGGIVAVLPGEFGVCVWSPGLDVSGNSLAGLQALEWLTTLSGRSIF.

Positions 63, 113, 157, 164, 188, 240, and 258 each coordinate substrate.

It belongs to the glutaminase family. In terms of assembly, homotetramer.

The catalysed reaction is L-glutamine + H2O = L-glutamate + NH4(+). This Ralstonia nicotianae (strain ATCC BAA-1114 / GMI1000) (Ralstonia solanacearum) protein is Glutaminase.